Consider the following 184-residue polypeptide: Cytochrome c homolog (184 aa).

Residues 1–10 (MDSFELNKIL) are Cytoplasmic-facing. The helical; Signal-anchor transmembrane segment at 11-31 (GAVLGTCLILLVTSFTANALF) threads the bilayer. The Periplasmic portion of the chain corresponds to 32–184 (SPKMPEKPGF…HPKPLPTASK (153 aa)). Positions 84, 87, 88, and 151 each coordinate heme c.

This sequence belongs to the cytochrome c family. Binds 1 heme c group covalently per subunit.

The protein localises to the cell membrane. In terms of biological role, may be involved in electron transfer from bc1 complex to aa3. The sequence is that of Cytochrome c homolog (cycM) from Bradyrhizobium diazoefficiens (strain JCM 10833 / BCRC 13528 / IAM 13628 / NBRC 14792 / USDA 110).